The primary structure comprises 445 residues: MAGLEAIKYGRGRLEVLDQLRLPHEFVYDNVSTCEEAFDSIKSMRVRGAPAIAIVAALALAVELHHEKDGSKTKQEAVQYINKRLDYLLGSRPTAVDLSNAIKLLKRVSQSAAEATNALDDSAACADVRKGYIDAAEKILEDDLTTNLAIGRYGAEYLRRQQMPIGGEEDDEDPSKFFTTSPPCTQGAPDRTYRKLSVLTHCNTGSLATSGHGTALGIIRSLHKMNYLDHAYCTETRPYNQGSRLTAFELVYEKIPSTLITDSMAGALFARMKESKNISAVIVGADRVARNGDTANKIGTYSLAVLAKAHNIKFIVAAPTTSIDLETVSGADIKIEDRAPTELTQISGAVVGKDGHVDVNTTARVAIAHQGIDVWNPSFDVTPSMYIDAVITEKGEVVRSSKGTFDFKTIMPERWAQQVEGKELSAETNVKAHVDDGTQFPMENI.

The active-site Proton donor is aspartate 286.

It belongs to the eIF-2B alpha/beta/delta subunits family. MtnA subfamily.

The protein localises to the cytoplasm. The protein resides in the nucleus. The enzyme catalyses 5-(methylsulfanyl)-alpha-D-ribose 1-phosphate = 5-(methylsulfanyl)-D-ribulose 1-phosphate. Its pathway is amino-acid biosynthesis; L-methionine biosynthesis via salvage pathway; L-methionine from S-methyl-5-thio-alpha-D-ribose 1-phosphate: step 1/6. Its function is as follows. Catalyzes the interconversion of methylthioribose-1-phosphate (MTR-1-P) into methylthioribulose-1-phosphate (MTRu-1-P). The chain is Methylthioribose-1-phosphate isomerase (mri1) from Sclerotinia sclerotiorum (strain ATCC 18683 / 1980 / Ss-1) (White mold).